Reading from the N-terminus, the 402-residue chain is Oligopeptide transport ATP-binding protein OppD (402 aa).

The 288-residue stretch at 22–309 folds into the ABC transporter domain; that stretch reads LDITDLHVNF…PLHPYTWALI (288 aa). Residue 58-65 coordinates ATP; that stretch reads GESGSGKS.

It belongs to the ABC transporter superfamily. As to quaternary structure, the complex is composed of two ATP-binding proteins (OppD and OppF), two transmembrane proteins (OppB and OppC) and a solute-binding protein (OppA).

It is found in the cell membrane. The catalysed reaction is a [peptide](out) + ATP + H2O = a [peptide](in) + ADP + phosphate + H(+). Its function is as follows. Part of the ABC transporter complex OppABCDF involved in the uptake of oligopeptides. Probably responsible for energy coupling to the transport system. This Mycoplasma genitalium (strain ATCC 33530 / DSM 19775 / NCTC 10195 / G37) (Mycoplasmoides genitalium) protein is Oligopeptide transport ATP-binding protein OppD (oppD).